Here is a 208-residue protein sequence, read N- to C-terminus: 3-demethoxyubiquinol 3-hydroxylase (208 aa).

Residues Glu57, Glu87, His90, Glu139, Glu171, and His174 each contribute to the Fe cation site.

The protein belongs to the COQ7 family. It depends on Fe cation as a cofactor.

The protein localises to the cell membrane. It catalyses the reaction a 5-methoxy-2-methyl-3-(all-trans-polyprenyl)benzene-1,4-diol + AH2 + O2 = a 3-demethylubiquinol + A + H2O. The protein operates within cofactor biosynthesis; ubiquinone biosynthesis. Functionally, catalyzes the hydroxylation of 2-nonaprenyl-3-methyl-6-methoxy-1,4-benzoquinol during ubiquinone biosynthesis. This is 3-demethoxyubiquinol 3-hydroxylase from Janthinobacterium sp. (strain Marseille) (Minibacterium massiliensis).